We begin with the raw amino-acid sequence, 106 residues long: Nucleoid-associated protein Nham_0463 (106 aa).

The protein belongs to the YbaB/EbfC family. In terms of assembly, homodimer.

The protein resides in the cytoplasm. It is found in the nucleoid. Binds to DNA and alters its conformation. May be involved in regulation of gene expression, nucleoid organization and DNA protection. The sequence is that of Nucleoid-associated protein Nham_0463 from Nitrobacter hamburgensis (strain DSM 10229 / NCIMB 13809 / X14).